A 114-amino-acid chain; its full sequence is Photosystem II reaction center Psb28 protein (114 aa).

It belongs to the Psb28 family. As to quaternary structure, part of the photosystem II complex.

Its subcellular location is the cellular thylakoid membrane. The sequence is that of Photosystem II reaction center Psb28 protein from Rippkaea orientalis (strain PCC 8801 / RF-1) (Cyanothece sp. (strain PCC 8801)).